The primary structure comprises 474 residues: tRNA-2-methylthio-N(6)-dimethylallyladenosine synthase (474 aa).

Residues 3-120 (KKLHIKTWGC…LPEMINAVRG (118 aa)) enclose the MTTase N-terminal domain. [4Fe-4S] cluster-binding residues include C12, C49, C83, C157, C161, and C164. The region spanning 143-375 (RADGPTAFVS…QERINQQAMA (233 aa)) is the Radical SAM core domain. Positions 378–441 (RRMLGTVQRI…TNSLRGKIVR (64 aa)) constitute a TRAM domain.

This sequence belongs to the methylthiotransferase family. MiaB subfamily. In terms of assembly, monomer. It depends on [4Fe-4S] cluster as a cofactor.

It localises to the cytoplasm. The catalysed reaction is N(6)-dimethylallyladenosine(37) in tRNA + (sulfur carrier)-SH + AH2 + 2 S-adenosyl-L-methionine = 2-methylsulfanyl-N(6)-dimethylallyladenosine(37) in tRNA + (sulfur carrier)-H + 5'-deoxyadenosine + L-methionine + A + S-adenosyl-L-homocysteine + 2 H(+). In terms of biological role, catalyzes the methylthiolation of N6-(dimethylallyl)adenosine (i(6)A), leading to the formation of 2-methylthio-N6-(dimethylallyl)adenosine (ms(2)i(6)A) at position 37 in tRNAs that read codons beginning with uridine. The sequence is that of tRNA-2-methylthio-N(6)-dimethylallyladenosine synthase from Klebsiella pneumoniae (strain 342).